The primary structure comprises 588 residues: Neuropeptide-like 1 (588 aa).

Positions 1–179 (MQCIPKKTFM…DPEVLEYSPD (179 aa)) are excised as a propeptide. The tract at residues 115-143 (NGDLPITIQERESDNDDEEKRSASSSDNV) is disordered. Position 194 is a threonine amide (threonine 194). Serine 210, serine 227, and serine 244 each carry serine amide. The residue at position 260 (tyrosine 260) is a Tyrosine amide. Glutamic acid 1-amide is present on glutamate 281. A propeptide spanning residues 285–299 (SIASLARSGDWPSVA) is cleaved from the precursor. Tyrosine amide is present on tyrosine 318. Residues 321–588 (SLSDDREAPS…SNSHIAPRSM (268 aa)) constitute a propeptide that is removed on maturation. The interval 342-382 (GNSEGKENEWQATPFTVSEDLDEGKAKNRSNRRIEASQTRH) is disordered.

The protein localises to the secreted. This is Neuropeptide-like 1 from Camponotus floridanus (Florida carpenter ant).